The chain runs to 437 residues: UPF0597 protein Shal_0864 (437 aa).

It belongs to the UPF0597 family.

This Shewanella halifaxensis (strain HAW-EB4) protein is UPF0597 protein Shal_0864.